The sequence spans 440 residues: Probable exopolygalacturonase C (440 aa).

A signal peptide spans 1 to 21; that stretch reads MLITNPALLGILASLVPLALG. N-linked (GlcNAc...) asparagine glycans are attached at residues Asn84 and Asn151. PbH1 repeat units follow at residues 188-210, 217-238, and 240-261; these read GDDI…PFNT, GTNI…AVNT, and SHNI…SIGS. N-linked (GlcNAc...) asparagine glycosylation is present at Asn219. Residue Asp231 is the Proton donor of the active site. His255 is a catalytic residue. An N-linked (GlcNAc...) asparagine glycan is attached at Asn271. A PbH1 4 repeat occupies 272–293; the sequence is ITNLRFEDVTVIDALYAARFKS. Residue Asn313 is glycosylated (N-linked (GlcNAc...) asparagine). Cys389 and Cys395 are disulfide-bonded. An N-linked (GlcNAc...) asparagine glycan is attached at Asn434.

It belongs to the glycosyl hydrolase 28 family.

Its subcellular location is the secreted. The enzyme catalyses [(1-&gt;4)-alpha-D-galacturonosyl](n) + H2O = alpha-D-galacturonate + [(1-&gt;4)-alpha-D-galacturonosyl](n-1). In terms of biological role, specific in hydrolyzing the terminal glycosidic bond of polygalacturonic acid and oligogalacturonates. This Aspergillus fumigatus (strain CBS 144.89 / FGSC A1163 / CEA10) (Neosartorya fumigata) protein is Probable exopolygalacturonase C (pgxC).